A 210-amino-acid polypeptide reads, in one-letter code: MKKNTLSAILMTLFLFISCNNSGKDGNTSANSADESVKGPNLTEISKKITDSNAVLLAVKEVEALLSSIDEIAAKAIGKKIHQNNGLDTENNHNGSLLAGAYAISTLIKQKLDGLKNEGLKEKIDAAKKCSETFTNKLKEKHTDLGKEGVTDADAKEAILKTNGTKTKGAEELGKLFESVEVLSKAAKEMLANSVKELTSPVVAESPKKP.

An N-terminal signal peptide occupies residues 1–18; that stretch reads MKKNTLSAILMTLFLFIS. Cys-19 carries the N-palmitoyl cysteine lipid modification. Cys-19 carries S-diacylglycerol cysteine lipidation.

It belongs to the OspC lipoprotein family. As to quaternary structure, homodimer. Binds human plasminogen on the bacterial surface, also binds human plasmin. Interacts with tick I.ricinus salivary protein Iric-1. Interacts with human complement C4 beta chain (C4B); whole bacteria bind to wells coated with C4b. Binding is inhibited by human complement factor C2.

It localises to the cell outer membrane. The protein localises to the cell surface. Its function is as follows. A major immunodominant protein in mammalian hosts. Required for the initial stages of mammalian infection. Interaction with tick I.ricinus salivary protein Salp15 protects the bacteria from antibody-mediated killing in vitro and in vivo. Inhibits macrophage-mediated phagocytosis of the bacteria. Binds human plasminogen; this probably confers an extracellular protease activity on the bacteria that allows it to traverse tissue. Binds human complement C4-B, which may inhibit the complement cascade. Experiments in mice suggest it may play another role after initial infection. The polypeptide is Outer surface protein C (Borreliella burgdorferi (strain ATCC 35210 / DSM 4680 / CIP 102532 / B31) (Borrelia burgdorferi)).